A 171-amino-acid chain; its full sequence is Endoribonuclease YbeY (171 aa).

H126, H130, and H136 together coordinate Zn(2+).

This sequence belongs to the endoribonuclease YbeY family. Requires Zn(2+) as cofactor.

It is found in the cytoplasm. Its function is as follows. Single strand-specific metallo-endoribonuclease involved in late-stage 70S ribosome quality control and in maturation of the 3' terminus of the 16S rRNA. This chain is Endoribonuclease YbeY, found in Rhizobium etli (strain ATCC 51251 / DSM 11541 / JCM 21823 / NBRC 15573 / CFN 42).